Consider the following 636-residue polypeptide: tRNA uridine 5-carboxymethylaminomethyl modification enzyme MnmG (636 aa).

Position 18 to 23 (18 to 23 (GAGHAG)) interacts with FAD. 281-295 (GPRYCPSIEDKIVRF) contacts NAD(+).

It belongs to the MnmG family. In terms of assembly, homodimer. Heterotetramer of two MnmE and two MnmG subunits. The cofactor is FAD.

It localises to the cytoplasm. In terms of biological role, NAD-binding protein involved in the addition of a carboxymethylaminomethyl (cmnm) group at the wobble position (U34) of certain tRNAs, forming tRNA-cmnm(5)s(2)U34. The protein is tRNA uridine 5-carboxymethylaminomethyl modification enzyme MnmG of Lactiplantibacillus plantarum (strain ATCC BAA-793 / NCIMB 8826 / WCFS1) (Lactobacillus plantarum).